Reading from the N-terminus, the 609-residue chain is UvrABC system protein C (609 aa).

Residues 19 to 97 form the GIY-YIG domain; that stretch reads ISPGCYLWKS…IKKHNPRFNV (79 aa). The region spanning 208–243 is the UVR domain; the sequence is ESLVGDLSIKMSASSNRMDFEKAARYRDMLQRIQNF.

It belongs to the UvrC family. As to quaternary structure, interacts with UvrB in an incision complex.

Its subcellular location is the cytoplasm. In terms of biological role, the UvrABC repair system catalyzes the recognition and processing of DNA lesions. UvrC both incises the 5' and 3' sides of the lesion. The N-terminal half is responsible for the 3' incision and the C-terminal half is responsible for the 5' incision. This Leptospira borgpetersenii serovar Hardjo-bovis (strain JB197) protein is UvrABC system protein C.